The primary structure comprises 550 residues: MASVFHYFLLVLVFLDTHAAQPFCLPGCTCSEESFGRTLQCTSVSLGKIPGNLSEEFKQVRIENSPLFEMPQGSFINMSTLEYLWLNFNNISVIHLGALEHLPELRELRLEGNKLCSVPWTAFRATPLLRVLDLKRNKIDALPELALQFLVSLTYLDLSSNRLTVVSKSVFLNWPAYQKCRQPDCGAEILSSLVVALHDNPWVCDCRLRGLVQFVKSITLPVILVNSYLICQGPLSKAGQLFHETELSACMKPQISTPSANITIRAGQNVTLRCLAQASPSPSIAWTYPLSMWREFDVLTSSTGEDTALSELAIPAAHLVDSGNYTCMASNSIGKSNLVISLHVQPAQALHAPDSLSIPSEGNAYIDLRVVKQTVHGILLEWLAVADTSKEEWFTLYIASDEAFRKEVVHIGPGINTYAVDDLLPGTKYEACLSLEGQPPHQGQCVAFVTGRDAGGLEAREHLLHVTVVLCVVLLAVPVGAYAWAAQGPCSCSKWVLRGCLHRRKAPSCTPAAPQSKDGSFREHPAVCDDGEGHIDTEGDKEKGGTEDNS.

Residues 1-19 (MASVFHYFLLVLVFLDTHA) form the signal peptide. The LRRNT domain occupies 23-54 (FCLPGCTCSEESFGRTLQCTSVSLGKIPGNLS). Residue N52 is glycosylated (N-linked (GlcNAc...) asparagine). LRR repeat units lie at residues 80 to 103 (TLEY…EHLP), 104 to 125 (ELRE…AFRA), 128 to 149 (LLRV…ALQF), and 152 to 173 (SLTY…VFLN). The LRRCT domain occupies 200–252 (NPWVCDCRLRGLVQFVKSITLPVILVNSYLICQGPLSKAGQLFHETELSACMK). Positions 253 to 341 (PQISTPSANI…SIGKSNLVIS (89 aa)) constitute an Ig-like domain. An intrachain disulfide couples C274 to C327. The Fibronectin type-III domain occupies 361 to 451 (EGNAYIDLRV…QGQCVAFVTG (91 aa)). Residues 466–486 (VTVVLCVVLLAVPVGAYAWAA) form a helical membrane-spanning segment. Residues 508-550 (SCTPAAPQSKDGSFREHPAVCDDGEGHIDTEGDKEKGGTEDNS) are disordered. Residues 519-550 (GSFREHPAVCDDGEGHIDTEGDKEKGGTEDNS) are compositionally biased toward basic and acidic residues.

In terms of assembly, interacts with LRIT1; may form a heterodimer with LRIT1.

It localises to the membrane. This is Leucine-rich repeat, immunoglobulin-like domain and transmembrane domain-containing protein 2 (LRIT2) from Homo sapiens (Human).